The chain runs to 322 residues: Lignin-forming anionic peroxidase (322 aa).

The N-terminal stretch at 1–27 (MNTPTQSFRAKAAIFSLLLLSCMQCHA) is a signal peptide. Gln-28 carries the post-translational modification Pyrrolidone carboxylic acid. Cystine bridges form between Cys-38–Cys-118, Cys-71–Cys-76, Cys-124–Cys-318, and Cys-203–Cys-229. The Proton acceptor role is filled by His-69. Ca(2+) contacts are provided by Asp-70, Val-73, Gly-75, Asp-77, and Ser-79. Pro-166 serves as a coordination point for substrate. His-196 is a heme b binding site. Thr-197 is a Ca(2+) binding site. The N-linked (GlcNAc...) asparagine glycan is linked to Asn-213. Positions 242, 245, and 250 each coordinate Ca(2+).

This sequence belongs to the peroxidase family. Classical plant (class III) peroxidase subfamily. Ca(2+) is required as a cofactor. The cofactor is heme b. In terms of tissue distribution, mesophyll protoplasts and to a much lesser extent, roots and germinating seeds.

The protein localises to the secreted. The enzyme catalyses 2 a phenolic donor + H2O2 = 2 a phenolic radical donor + 2 H2O. Removal of H(2)O(2), oxidation of toxic reductants, biosynthesis and degradation of lignin, suberization, auxin catabolism, response to environmental stresses such as wounding, pathogen attack and oxidative stress. These functions might be dependent on each isozyme/isoform in each plant tissue. In terms of biological role, plays an integral role in secondary cell wall biosynthesis by the polymerization of cinnamyl alcohols into lignin and by forming rigid cross-links between cellulose, pectin, hydroxy-proline-rich glycoproteins, and lignin. This Nicotiana sylvestris (Wood tobacco) protein is Lignin-forming anionic peroxidase.